The chain runs to 440 residues: Gamma-aminobutyric acid receptor subunit pi (440 aa).

The N-terminal stretch at 1-23 is a signal peptide; it reads MSYSLYLAFVCLNLLAQRMCIQG. Over 24 to 241 the chain is Extracellular; that stretch reads NQFNVEVSRS…LVLQFELRRN (218 aa). N-linked (GlcNAc...) asparagine glycosylation is found at Asn43, Asn102, and Asn145. A disulfide bridge links Cys160 with Cys174. 2 N-linked (GlcNAc...) asparagine glycosylation sites follow: Asn196 and Asn228. A helical membrane pass occupies residues 242–262; it reads VLYFILETYVPSTFLVVLSWV. Topologically, residues 263-270 are cytoplasmic; that stretch reads SFWISLES. Residues 271-290 traverse the membrane as a helical segment; the sequence is VPARTCIGVTTVLSMTTLMI. Residues 291–301 are Extracellular-facing; the sequence is GSRTSLPNTNC. A helical membrane pass occupies residues 302-322; sequence FIKAIDVYLGICFSFVFGALL. The Cytoplasmic segment spans residues 323 to 419; that stretch reads EYAVAHYSSL…NPSNVDRYSK (97 aa). A helical membrane pass occupies residues 420–440; it reads LLFPLIFMLANVFYWAYYMYF.

Belongs to the ligand-gated ion channel (TC 1.A.9) family. Gamma-aminobutyric acid receptor (TC 1.A.9.5) subfamily. GABRP sub-subfamily. As to quaternary structure, heteropentamer, formed by a combination of alpha (GABRA1-6), beta (GABRB1-3), gamma (GABRG1-3), delta (GABRD), epsilon (GABRE), rho (GABRR1-3), pi (GABRP) and theta (GABRQ) chains, each subunit exhibiting distinct physiological and pharmacological properties. Expressed in lungs, in alveolar epithelium.

The protein localises to the cell membrane. The protein resides in the apical cell membrane. The enzyme catalyses chloride(in) = chloride(out). Functionally, pi subunit of the heteropentameric ligand-gated chloride channel gated by gamma-aminobutyric acid (GABA). GABA-gated chloride channels, also named GABA(A) receptors (GABAAR), consist of five subunits arranged around a central pore and contain GABA active binding site(s) located at the alpha and beta subunit interfaces. When activated by GABA, GABAARs selectively allow the flow of chloride anions across the cell membrane down their electrochemical gradient. Pi-containing GABAARs are mostly located in peripheral tissues. In the uterus, pi subunits modulate uterus contraction by altering the sensitivity of GABAARs to pregnanolone. In the lungs, pi-containing GABAARs contribute to pulmonary fluid transport via luminal secretion of chloride. The sequence is that of Gamma-aminobutyric acid receptor subunit pi from Rattus norvegicus (Rat).